Here is a 203-residue protein sequence, read N- to C-terminus: Casparian strip membrane protein 1 (203 aa).

Alanine 2 carries the N-acetylalanine modification. The Cytoplasmic portion of the chain corresponds to 2–40 (AKESTTIDVGEPSTVTKSSSHVVKKKGFVAAAAGGGAKR). Residues 41-61 (GLAIFDFLLRLAAIGVTIGAA) traverse the membrane as a helical segment. The Extracellular portion of the chain corresponds to 62 to 92 (SVMYTAQETLPFFTQFLQFQAGYDDLPAFQY). The helical transmembrane segment at 93–113 (FVIAVAIVASYLVLSLPFSIV) threads the bilayer. At 114–124 (TIVRPLAVAPR) the chain is on the cytoplasmic side. The helical transmembrane segment at 125-145 (LILLIFDTLVVTLNTSAAAAA) threads the bilayer. Topologically, residues 146–177 (ASIVYLAHNGNQSTNWLPICQQFGDFCQNVST) are extracellular. N-linked (GlcNAc...) asparagine glycans are attached at residues asparagine 156 and asparagine 174. A helical membrane pass occupies residues 178–198 (AVVAASIAILFFIVLIIISAI). Over 199-203 (ALKRH) the chain is Cytoplasmic.

Belongs to the Casparian strip membrane proteins (CASP) family. Homodimer and heterodimers.

It localises to the cell membrane. Regulates membrane-cell wall junctions and localized cell wall deposition. Required for establishment of the Casparian strip membrane domain (CSD) and the subsequent formation of Casparian strips, a cell wall modification of the root endodermis that determines an apoplastic barrier between the intraorganismal apoplasm and the extraorganismal apoplasm and prevents lateral diffusion. The chain is Casparian strip membrane protein 1 from Arabidopsis lyrata subsp. lyrata (Lyre-leaved rock-cress).